Consider the following 212-residue polypeptide: Endoplasmic reticulum vesicle protein 25 (212 aa).

A signal peptide spans 1–21 (MKSFAACVLLLCALFFEQVFA). Residues 22 to 181 (VRFDIPASTK…TNESTNRRVR (160 aa)) are Lumenal-facing. Positions 34–122 (QVCIRDFVSE…SRSIELDIES (89 aa)) constitute a GOLD domain. The helical transmembrane segment at 182–202 (NFSIAVIVVLVALGAWQVNYM) threads the bilayer. Over 203–212 (KNFFRAKHII) the chain is Cytoplasmic.

It belongs to the EMP24/GP25L family.

It is found in the endoplasmic reticulum membrane. It localises to the golgi apparatus membrane. In terms of biological role, constituent of COPII-coated endoplasmic reticulum-derived transport vesicles. Required for efficient transport of a subset of secretory proteins to the Golgi. Facilitates retrograde transport from the Golgi to the endoplasmic reticulum. This Kluyveromyces lactis (strain ATCC 8585 / CBS 2359 / DSM 70799 / NBRC 1267 / NRRL Y-1140 / WM37) (Yeast) protein is Endoplasmic reticulum vesicle protein 25 (ERV25).